Reading from the N-terminus, the 327-residue chain is Malate dehydrogenase (327 aa).

12 to 18 (GAAGQIG) lines the NAD(+) pocket. Substrate-binding residues include R93 and R99. Residues N106, Q113, and 130–132 (VGN) contribute to the NAD(+) site. Residues N132 and R163 each contribute to the substrate site. Catalysis depends on H188, which acts as the Proton acceptor.

It belongs to the LDH/MDH superfamily. MDH type 2 family.

The catalysed reaction is (S)-malate + NAD(+) = oxaloacetate + NADH + H(+). Functionally, catalyzes the reversible oxidation of malate to oxaloacetate. The chain is Malate dehydrogenase from Cupriavidus necator (strain ATCC 17699 / DSM 428 / KCTC 22496 / NCIMB 10442 / H16 / Stanier 337) (Ralstonia eutropha).